A 416-amino-acid chain; its full sequence is F-box/FBD/LRR-repeat protein At1g13570 (416 aa).

In terms of domain architecture, F-box spans 5 to 53 (PDFISDLPQSIIENILTRLSIRDAIRTSVLSSKWRYKWSTLTDLVFDEK). 5 LRR repeats span residues 115 to 142 (VLKL…ELCH), 164 to 189 (QILV…SLSY), 203 to 229 (MYLY…SVSM), 238 to 263 (FEQS…VGYI), and 294 to 321 (CFED…KVSA). The FBD domain maps to 346 to 384 (LPSLESVKITDASGIRYELEFIRFLLGTSPVLETVTVSS).

The sequence is that of F-box/FBD/LRR-repeat protein At1g13570 from Arabidopsis thaliana (Mouse-ear cress).